Consider the following 156-residue polypeptide: Cyanate hydratase (156 aa).

Catalysis depends on residues Arg96, Glu99, and Ser122.

The protein belongs to the cyanase family.

The enzyme catalyses cyanate + hydrogencarbonate + 3 H(+) = NH4(+) + 2 CO2. In terms of biological role, catalyzes the reaction of cyanate with bicarbonate to produce ammonia and carbon dioxide. The sequence is that of Cyanate hydratase from Pseudomonas entomophila (strain L48).